The following is a 354-amino-acid chain: Isopentenyl-diphosphate delta-isomerase (354 aa).

Residue 11–12 (KK) participates in substrate binding. Residues S67, 68–70 (SMT), S98, and N126 contribute to the FMN site. 98–100 (SFK) contributes to the substrate binding site. Q160 is a substrate binding site. E161 provides a ligand contact to Mg(2+). FMN is bound by residues K192, T222, and 289–290 (AA).

Belongs to the IPP isomerase type 2 family. Homooctamer. Dimer of tetramers. FMN is required as a cofactor. Requires NADPH as cofactor. The cofactor is Mg(2+).

It is found in the cytoplasm. It catalyses the reaction isopentenyl diphosphate = dimethylallyl diphosphate. Involved in the biosynthesis of isoprenoids. Catalyzes the 1,3-allylic rearrangement of the homoallylic substrate isopentenyl (IPP) to its allylic isomer, dimethylallyl diphosphate (DMAPP). The sequence is that of Isopentenyl-diphosphate delta-isomerase from Borreliella afzelii (strain PKo) (Borrelia afzelii).